We begin with the raw amino-acid sequence, 377 residues long: tRNA-splicing endonuclease subunit SEN2 (377 aa).

Residues 119-174 (ETEMTLEKVTQQRRLQRLEFKKERAKLERELLELRKKGGHIDEENILLEKQRESLR) are a coiled coil. Catalysis depends on residues Y289, H297, and K328.

Belongs to the tRNA-intron endonuclease family. As to quaternary structure, heterotetramer composed of SEN2, SEN15, SEN34 and SEN54. Interacts directly with SEN54.

Its subcellular location is the nucleus. The protein resides in the endomembrane system. It is found in the mitochondrion outer membrane. It carries out the reaction pretRNA = a 3'-half-tRNA molecule with a 5'-OH end + a 5'-half-tRNA molecule with a 2',3'-cyclic phosphate end + an intron with a 2',3'-cyclic phosphate and a 5'-hydroxyl terminus.. Constitutes one of the two catalytic subunit of the tRNA-splicing endonuclease complex, a complex responsible for identification and cleavage of the splice sites in pre-tRNA. It cleaves pre-tRNA at the 5'- and 3'-splice sites to release the intron. The products are an intron and two tRNA half-molecules bearing 2',3'-cyclic phosphate and 5'-OH termini. There are no conserved sequences at the splice sites, but the intron is invariably located at the same site in the gene, placing the splice sites an invariant distance from the constant structural features of the tRNA body. This subunit may anchor the endonuclease complex to the nuclear membrane. Probably carries the active site for 5'-splice site cleavage. This chain is tRNA-splicing endonuclease subunit SEN2 (SEN2), found in Saccharomyces cerevisiae (strain ATCC 204508 / S288c) (Baker's yeast).